Reading from the N-terminus, the 435-residue chain is 4-hydroxy-3-methylbut-2-en-1-yl diphosphate synthase (flavodoxin) (435 aa).

Residues 1–15 (MTDVDLRARPQEGMK) are compositionally biased toward basic and acidic residues. Residues 1 to 24 (MTDVDLRARPQEGMKEIPAGPKGR) form a disordered region. Cysteine 316, cysteine 319, cysteine 362, and glutamate 369 together coordinate [4Fe-4S] cluster.

Belongs to the IspG family. Requires [4Fe-4S] cluster as cofactor.

The enzyme catalyses (2E)-4-hydroxy-3-methylbut-2-enyl diphosphate + oxidized [flavodoxin] + H2O + 2 H(+) = 2-C-methyl-D-erythritol 2,4-cyclic diphosphate + reduced [flavodoxin]. It functions in the pathway isoprenoid biosynthesis; isopentenyl diphosphate biosynthesis via DXP pathway; isopentenyl diphosphate from 1-deoxy-D-xylulose 5-phosphate: step 5/6. Converts 2C-methyl-D-erythritol 2,4-cyclodiphosphate (ME-2,4cPP) into 1-hydroxy-2-methyl-2-(E)-butenyl 4-diphosphate. This chain is 4-hydroxy-3-methylbut-2-en-1-yl diphosphate synthase (flavodoxin), found in Afipia carboxidovorans (strain ATCC 49405 / DSM 1227 / KCTC 32145 / OM5) (Oligotropha carboxidovorans).